A 55-amino-acid chain; its full sequence is Large ribosomal subunit protein bL33A (55 aa).

The protein belongs to the bacterial ribosomal protein bL33 family.

The protein is Large ribosomal subunit protein bL33A of Rhodococcus jostii (strain RHA1).